The chain runs to 131 residues: MEARPLATPEEAWRIASSLRYRHIEGTVVAVVQDVETKEVLMVGHMDPIAVVLTLTTGLAHYYSTTRKRIWLKGETSGHYQIVKEFRSDCDGDAVVIKVVQIGAACHTGSRSCFESKYSLIKALKLSLRHG.

Residue Asp89 coordinates Mg(2+). Cys90 is a binding site for Zn(2+). Residues Asp91 and Asp93 each contribute to the Mg(2+) site. The Zn(2+) site is built by Cys106 and Cys113.

It belongs to the PRA-CH family. Homodimer. It depends on Mg(2+) as a cofactor. Requires Zn(2+) as cofactor.

The protein resides in the cytoplasm. It catalyses the reaction 1-(5-phospho-beta-D-ribosyl)-5'-AMP + H2O = 1-(5-phospho-beta-D-ribosyl)-5-[(5-phospho-beta-D-ribosylamino)methylideneamino]imidazole-4-carboxamide. It functions in the pathway amino-acid biosynthesis; L-histidine biosynthesis; L-histidine from 5-phospho-alpha-D-ribose 1-diphosphate: step 3/9. In terms of biological role, catalyzes the hydrolysis of the adenine ring of phosphoribosyl-AMP. The protein is Phosphoribosyl-AMP cyclohydrolase of Pyrobaculum aerophilum (strain ATCC 51768 / DSM 7523 / JCM 9630 / CIP 104966 / NBRC 100827 / IM2).